The primary structure comprises 668 residues: MKHYSIQPANLEFNAEGTPVSRDFDDVYFSNDNGLEETRYVFLGGNQLEVRFPEHPHPLFVIAESGFGTGLNFLTLWKAFDQFREAHPQAQLQRLHFISFEKFPLTRADLALAHQHWPELAPWAEQLQAQWPMPLPGCHRLLLDEGRVTLDLWFGDINELTSQLDDSLNQKVDAWFLDGFAPAKNPDMWTQNLFNAMARLARPGGTLATFTSAGFVRRGLQEAGFTMQKRKGFGRKREMLCGVMEQTLPLPCSTPWFNRTGSSKREVAIIGGGIASALLSLALLRRGWQVALYCADEAPALGASGNRQGALYPLLSKHDEALNRLFSNAFTFARRFYDQLPVKFDHDWCGVTQLGWDEKSQHKIAQMLSMDLPAELAVAVEANAVEQITGVATNCSGITYPQGGWLCPAELTRNVLELAQQQGLQIYYQYQLQNLSRKDDCWLLNFAGDQQATHSVVVLANGHQISRFSQTSTLPVYSVAGQVSHIPTTPELAELKQVLCYDGYLTPQNPANQHHCIGASYHRGSEDTAYSEDDQQQNRQRLIDCFPQAQWAKEVDVSDKEARCGVRCATRDHLPMVGNVPDYEATLVEYASLAEQKDEAVSAPVFDDLFMFAALGSRGLCSAPLCAEILAAQMSDEPNPMDASTLAALNPNRLWVRKLLKGKAVKAG.

The tRNA (mnm(5)s(2)U34)-methyltransferase stretch occupies residues 1 to 245; it reads MKHYSIQPAN…KREMLCGVME (245 aa). The segment at 270–668 is FAD-dependent cmnm(5)s(2)U34 oxidoreductase; sequence IGGGIASALL…LLKGKAVKAG (399 aa).

This sequence in the N-terminal section; belongs to the methyltransferase superfamily. tRNA (mnm(5)s(2)U34)-methyltransferase family. The protein in the C-terminal section; belongs to the DAO family. FAD serves as cofactor.

Its subcellular location is the cytoplasm. The catalysed reaction is 5-aminomethyl-2-thiouridine(34) in tRNA + S-adenosyl-L-methionine = 5-methylaminomethyl-2-thiouridine(34) in tRNA + S-adenosyl-L-homocysteine + H(+). In terms of biological role, catalyzes the last two steps in the biosynthesis of 5-methylaminomethyl-2-thiouridine (mnm(5)s(2)U) at the wobble position (U34) in tRNA. Catalyzes the FAD-dependent demodification of cmnm(5)s(2)U34 to nm(5)s(2)U34, followed by the transfer of a methyl group from S-adenosyl-L-methionine to nm(5)s(2)U34, to form mnm(5)s(2)U34. The protein is tRNA 5-methylaminomethyl-2-thiouridine biosynthesis bifunctional protein MnmC of Shigella flexneri serotype 5b (strain 8401).